We begin with the raw amino-acid sequence, 702 residues long: MKNKECCKCYNPCEKICVNYSTTDVAFERPNPCKPIPCKPTPIPCDPCHNTKDNLTGDIVIIGAGAAGSLLAHYLARFSNMKIILLEAGHSHFNDPVVTDPMGFFGKYNPPNENISMSQNPSYSWQGAQEPNTGAYGNRPIIAHGMGFGGSTMINRLNLVVGGRTVFDNDWPVGWKYDDVKNYFRRVLVDINPVRDNTKASITSVALDALRIIAEQQIASGEPVDFLLNKATGNVPNVEKTTPDAVPLNLNDYEGVNSVVAFSSFYMGVNQLSDGNYIRKYAGNTYLNRNYVDENGRGIGKFSGLRVVSDAVVDRIIFKGNRAVGVNYIDREGIMHYVKVNKEVVVTSGAFYTPTILQRSGIGDFTYLSSIGVKNLVYNNPLVGTGLKNHYSPVTITRVHGEPSEVSRFLSNMAANPTNMGFKGLAELGFHRLDPNKPANANTVTYRKYQLMMTAGVGIPAEQQYLSGLSPSSNNLFTLIADDIRFAPEGYIKIGTPNIPRDVPKIFFNTFVTYTPTSAPADQQWPIAQKTLAPLISALLGYDIIYQTLMSMNQTARDSGFQVSLEMVYPLNDLIYKLHNGLATYGANWWHYFVPTLVGDDTPAGREFADTLSKLSYYPRVGAHLDSHQGCSCSIGRTVDSNLKVIGTQNVRVADLSAAAFPPGGNTWATASMIGARAVDLILGFPYLRDLPVNDVPILNVN.

The chain crosses the membrane as a helical span at residues 55–75; it reads LTGDIVIIGAGAAGSLLAHYL. 58 to 88 is a binding site for FAD; that stretch reads DIVIIGAGAAGSLLAHYLARFSNMKIILLEA. His-628 is an active-site residue.

It belongs to the GMC oxidoreductase family. FAD is required as a cofactor.

Its subcellular location is the virion. It is found in the host membrane. This is Putative GMC-type oxidoreductase R135 from Acanthamoeba polyphaga (Amoeba).